Here is a 267-residue protein sequence, read N- to C-terminus: Aliphatic sulfonates import ATP-binding protein SsuB 1 (267 aa).

One can recognise an ABC transporter domain in the interval 35-249; it reads VRVRGLRRVF…RRADPAFDRL (215 aa). An ATP-binding site is contributed by 67 to 74; sequence GRSGSGKS.

Belongs to the ABC transporter superfamily. Aliphatic sulfonates importer (TC 3.A.1.17.2) family. As to quaternary structure, the complex is composed of two ATP-binding proteins (SsuB), two transmembrane proteins (SsuC) and a solute-binding protein (SsuA).

It localises to the cell membrane. It carries out the reaction ATP + H2O + aliphatic sulfonate-[sulfonate-binding protein]Side 1 = ADP + phosphate + aliphatic sulfonateSide 2 + [sulfonate-binding protein]Side 1.. Part of the ABC transporter complex SsuABC involved in aliphatic sulfonates import. Responsible for energy coupling to the transport system. This is Aliphatic sulfonates import ATP-binding protein SsuB 1 from Frankia alni (strain DSM 45986 / CECT 9034 / ACN14a).